Here is a 156-residue protein sequence, read N- to C-terminus: Large ribosomal subunit protein uL15 (156 aa).

The disordered stretch occupies residues 29–48; sequence CGKGKTSGRGHKGQKARSGV. Positions 34-43 are enriched in basic residues; it reads TSGRGHKGQK.

It belongs to the universal ribosomal protein uL15 family. Part of the 50S ribosomal subunit.

Binds to the 23S rRNA. The sequence is that of Large ribosomal subunit protein uL15 from Ehrlichia chaffeensis (strain ATCC CRL-10679 / Arkansas).